We begin with the raw amino-acid sequence, 368 residues long: 1-aminocyclopropane-1-carboxylate synthase (368 aa).

K230 is modified (N6-(pyridoxal phosphate)lysine).

It belongs to the class-I pyridoxal-phosphate-dependent aminotransferase family. As to quaternary structure, homodimer. Pyridoxal 5'-phosphate is required as a cofactor.

The enzyme catalyses S-adenosyl-L-methionine = 1-aminocyclopropane-1-carboxylate + S-methyl-5'-thioadenosine + H(+). It functions in the pathway alkene biosynthesis; ethylene biosynthesis via S-adenosyl-L-methionine; ethylene from S-adenosyl-L-methionine: step 1/2. Functionally, catalyzes the formation of 1-aminocyclopropane-1-carboxylate, a direct precursor of ethylene in higher plants. The polypeptide is 1-aminocyclopropane-1-carboxylate synthase (ACS5) (Vigna radiata var. radiata (Mung bean)).